The following is a 320-amino-acid chain: o-succinylbenzoate synthase (320 aa).

The active-site Proton donor is the lysine 133. The Mg(2+) site is built by aspartate 161, glutamate 190, and aspartate 213. Lysine 235 (proton acceptor) is an active-site residue.

Belongs to the mandelate racemase/muconate lactonizing enzyme family. MenC type 1 subfamily. A divalent metal cation is required as a cofactor.

The catalysed reaction is (1R,6R)-6-hydroxy-2-succinyl-cyclohexa-2,4-diene-1-carboxylate = 2-succinylbenzoate + H2O. Its pathway is quinol/quinone metabolism; 1,4-dihydroxy-2-naphthoate biosynthesis; 1,4-dihydroxy-2-naphthoate from chorismate: step 4/7. The protein operates within quinol/quinone metabolism; menaquinone biosynthesis. Converts 2-succinyl-6-hydroxy-2,4-cyclohexadiene-1-carboxylate (SHCHC) to 2-succinylbenzoate (OSB). The protein is o-succinylbenzoate synthase of Shigella flexneri.